The sequence spans 194 residues: Large ribosomal subunit protein bL9 (194 aa).

The protein belongs to the bacterial ribosomal protein bL9 family.

Functionally, binds to the 23S rRNA. The protein is Large ribosomal subunit protein bL9 of Paracoccus denitrificans (strain Pd 1222).